The sequence spans 692 residues: Elongation factor G (692 aa).

Positions 8-282 constitute a tr-type G domain; it reads EKTRNIGIMA…AVVEYMPAPT (275 aa). Residues 17 to 24, 81 to 85, and 135 to 138 each bind GTP; these read AHIDAGKT, DTPGH, and NKMD. The interval 285-304 is disordered; it reads PNIKGVHPETGEADERHSSD. A compositionally biased stretch (basic and acidic residues) spans 290-304; sequence VHPETGEADERHSSD.

The protein belongs to the TRAFAC class translation factor GTPase superfamily. Classic translation factor GTPase family. EF-G/EF-2 subfamily.

The protein resides in the cytoplasm. Functionally, catalyzes the GTP-dependent ribosomal translocation step during translation elongation. During this step, the ribosome changes from the pre-translocational (PRE) to the post-translocational (POST) state as the newly formed A-site-bound peptidyl-tRNA and P-site-bound deacylated tRNA move to the P and E sites, respectively. Catalyzes the coordinated movement of the two tRNA molecules, the mRNA and conformational changes in the ribosome. The chain is Elongation factor G from Desulfitobacterium hafniense (strain Y51).